A 403-amino-acid polypeptide reads, in one-letter code: Leu/Ile/Val-binding protein homolog 8 (403 aa).

A signal peptide spans 1 to 26; the sequence is MRLSRLLIGASLGVALSSTVFTAALA.

Belongs to the leucine-binding protein family.

In terms of biological role, component of an amino-acid transport system. The polypeptide is Leu/Ile/Val-binding protein homolog 8 (Brucella melitensis biotype 1 (strain ATCC 23456 / CCUG 17765 / NCTC 10094 / 16M)).